The following is a 312-amino-acid chain: MDDKFDDDALPNSKTTPEDYGDKLAEYDYTNTFPNTWMRLREPFREYIAEFVGVAVLIIFGVGADCQVVLSANTGVAPSPKGDYLSLNCGWAIGTAMGVWISGGISGGHINPAVTLALMAWRGFPWWKVPGFIFAQLLGGIVGAGLVYVNYIHAIDIVEGGRHIRTLDTAGLFATYAADYMTNVSCFFSEFLATAVLIVVIHAMNDKRNAPPPAGLAPLVLFFLILGIGASLGMETGYAINPARDLGPRMLTAMVGYGRQVFAFRNQYWIWCPVIAPFLGAQVGTIFYDLFFYKGQDNVFGRLGSHIHISPA.

Topologically, residues 1–50 are cytoplasmic; that stretch reads MDDKFDDDALPNSKTTPEDYGDKLAEYDYTNTFPNTWMRLREPFREYIAE. The helical transmembrane segment at 51 to 71 threads the bilayer; it reads FVGVAVLIIFGVGADCQVVLS. At 72–89 the chain is on the extracellular side; that stretch reads ANTGVAPSPKGDYLSLNC. Residues 90 to 110 form a helical membrane-spanning segment; the sequence is GWAIGTAMGVWISGGISGGHI. An NPA 1 motif is present at residues 111 to 113; that stretch reads NPA. Topologically, residues 111-128 are cytoplasmic; sequence NPAVTLALMAWRGFPWWK. A helical membrane pass occupies residues 129 to 149; the sequence is VPGFIFAQLLGGIVGAGLVYV. Residues 150-183 lie on the Extracellular side of the membrane; the sequence is NYIHAIDIVEGGRHIRTLDTAGLFATYAADYMTN. The N-linked (GlcNAc...) asparagine glycan is linked to asparagine 183. The helical transmembrane segment at 184–204 threads the bilayer; sequence VSCFFSEFLATAVLIVVIHAM. Over 205–213 the chain is Cytoplasmic; the sequence is NDKRNAPPP. A helical membrane pass occupies residues 214 to 234; it reads AGLAPLVLFFLILGIGASLGM. Residues 235–267 are Extracellular-facing; it reads ETGYAINPARDLGPRMLTAMVGYGRQVFAFRNQ. Residues 241–243 carry the NPA 2 motif; it reads NPA. A helical transmembrane segment spans residues 268–288; sequence YWIWCPVIAPFLGAQVGTIFY. Residues 289 to 312 lie on the Cytoplasmic side of the membrane; the sequence is DLFFYKGQDNVFGRLGSHIHISPA.

Belongs to the MIP/aquaporin (TC 1.A.8) family.

The protein localises to the membrane. It carries out the reaction H2O(in) = H2O(out). It catalyses the reaction glycerol(in) = glycerol(out). The catalysed reaction is NH4(+)(in) = NH4(+)(out). Functionally, water channel required to facilitate the transport of water across membranes. In addition to water, also shows strong glycerol and ammonium transport activities. May be involved in fungal nitrogen (ammonium) support of the plant host in symbiosis. Glycerol accumulation has never been observed in ectomycorrhizal (ECM) fungi, therefore, glycerol permeability of Lacbi1:391485 might be a relict of the affiliation of the protein to the group of aquaglyceroporins, and other osmotic active compounds (e.g. trehalose or mannitol) may have taken over glycerol function in ECM fungi. The sequence is that of Aquaporin Lacbi1:391485 from Laccaria bicolor (strain S238N-H82 / ATCC MYA-4686) (Bicoloured deceiver).